A 79-amino-acid polypeptide reads, in one-letter code: Reactive oxygen species modulator 1 (79 aa).

The chain crosses the membrane as a helical span at residues 22-44; sequence GFVMGCAVGMAAGALFGTFSCLR. Residues 42–60 are sufficient for antibacterial activity; it reads CLRIGMRGRELMGGIGKTM.

This sequence belongs to the MGR2 family.

It localises to the mitochondrion inner membrane. Functionally, has antibacterial activity against a variety of bacteria including S.aureus, P.aeruginosa and M.tuberculosis. Acts by inducing bacterial membrane breakage. Its function is as follows. Induces production of reactive oxygen species (ROS) which are necessary for cell proliferation. May play a role in inducing oxidative DNA damage and replicative senescence. May play a role in the coordination of mitochondrial morphology and cell proliferation. This is Reactive oxygen species modulator 1 (ROMO1) from Bos taurus (Bovine).